The sequence spans 655 residues: Putative sensor protein Sfri_3689 (655 aa).

An N-terminal signal peptide occupies residues 1-17 (MKTLLLLLIIITMPVLA). Residues 252-272 (FALAILVAIMSAIGMIFTGFI) traverse the membrane as a helical segment. Residues 419–653 (GIAHEINNPT…QIRLIFALAQ (235 aa)) enclose the Histidine kinase domain. His422 carries the phosphohistidine; by autocatalysis modification.

It is found in the cell membrane. It catalyses the reaction ATP + protein L-histidine = ADP + protein N-phospho-L-histidine.. This is Putative sensor protein Sfri_3689 from Shewanella frigidimarina (strain NCIMB 400).